Consider the following 176-residue polypeptide: Peptide methionine sulfoxide reductase MsrA (176 aa).

Residue Cys10 is part of the active site.

This sequence belongs to the MsrA Met sulfoxide reductase family.

It carries out the reaction L-methionyl-[protein] + [thioredoxin]-disulfide + H2O = L-methionyl-(S)-S-oxide-[protein] + [thioredoxin]-dithiol. It catalyses the reaction [thioredoxin]-disulfide + L-methionine + H2O = L-methionine (S)-S-oxide + [thioredoxin]-dithiol. Has an important function as a repair enzyme for proteins that have been inactivated by oxidation. Catalyzes the reversible oxidation-reduction of methionine sulfoxide in proteins to methionine. The polypeptide is Peptide methionine sulfoxide reductase MsrA (Leptospira borgpetersenii serovar Hardjo-bovis (strain L550)).